The following is a 3646-amino-acid chain: Platelet adherence protein A (3646 aa).

The N-terminal stretch at 1–33 (MKDFLKKVLILFTVLLMSMPSSVLNLGTSVVRA) is a signal peptide. The segment at 34-359 (DDPLNIETRR…KNVSFYVNEQ (326 aa)) is does not bind platelets. The interval 34 to 690 (DDPLNIETRR…NQDAHAKTKD (657 aa)) is F2, binds platelets, fibronectin, vitronectin, salivary pellicle, causes ADP secretion by dense granules. Residues 34-1328 (DDPLNIETRR…KFVLSDTLEE (1295 aa)) form a binds platelets region. Residues 75 to 373 (DLVILQDASG…VFSQKILESV (299 aa)) form the VWFA domain. An Integrin-like recognition motif NGR motif is present at residues 214 to 216 (NGR). The Integrin-like recognition motif RGT motif lies at 416–418 (RGT). Residues 439–466 (KNSFDYDLSKEARAPETDEDSEVDPPEN) are disordered. The span at 445 to 454 (DLSKEARAPE) shows a compositional bias: basic and acidic residues. Residues 485-487 (AGD) carry the Integrin-like recognition motif AGD motif. Positions 709-3205 (TEVDKKVNEK…TVPNKATIAF (2497 aa)) are central region with RrgB repeats. Basic and acidic residues-rich tracts occupy residues 1124 to 1135 (KDKNDHKGEKET) and 1563 to 1573 (DHNPKFHKDSN). Disordered regions lie at residues 1124 to 1153 (KDKN…KKIN), 1563 to 1589 (DHNP…PIEK), 2011 to 2036 (FNND…EPEL), 2170 to 2198 (EKDS…KPSA), 2320 to 2343 (KTEK…IKKE), 2467 to 2492 (PNRP…PEIK), 2611 to 2644 (ASYR…PIEK), 2767 to 2792 (FNND…EPEL), 2916 to 2948 (PNKP…NSKP), 3202 to 3252 (TIAF…NPST), 3371 to 3412 (AAAK…AALE), and 3550 to 3618 (NDKP…PKTG). The segment covering 2011 to 2022 (FNNDPGTEQSSK) has biased composition (polar residues). Positions 2767-2778 (FNNDPGTEQSSK) are enriched in polar residues. The segment covering 3210-3220 (GKNGTKESNPV) has biased composition (polar residues). Residues 3223–3237 (RPRDPEKPEEPKPNE) are compositionally biased toward basic and acidic residues. Coiled coils occupy residues 3326 to 3376 (IAKI…AKEK) and 3408 to 3475 (VAAL…VNDK). Over residues 3371–3406 (AAAKEKAAAAPATPAPASDSDAGNATATPAPADNNA) the composition is skewed to low complexity. The segment covering 3550–3560 (NDKPKVTNTVN) has biased composition (polar residues). A compositionally biased stretch (pro residues) spans 3563 to 3605 (PPEPTTPPQTPPHTPPTTPGTPPPTTPDTPPAPKGDLPPAPTP). The LPXTG sorting signal signature appears at 3614–3618 (LPKTG). Thr3617 is subject to Pentaglycyl murein peptidoglycan amidated threonine. The propeptide at 3618–3646 (GTSATMVNEVIIGMILVLMGLLLRRKPKH) is removed by sortase.

It is found in the secreted. The protein resides in the cell wall. With respect to regulation, whole bacterial adhesion to Chinese hamster ovary cells expressing GPIIbIIIa is abrogated by integrin inhibitor RGDS and GPIIbIIIa inhibitor Abciximab. Its function is as follows. A cell wall protein involved with Hsa in host cell interactions required for colonization and pathogenesis. Involved in recognition of platelets. Interacts with human platelet integrin receptor GPIIbIIIa (a complex of ITGA2B and ITGB3). Involved in platelet spreading, presumably by activation of outside-in signaling leading to platelet activation and then spreading. Spreading also involves GPIIbIIIa. Binding to platelets under static conditions causes platelet dense granules to secrete ADP (similar to release induced by fibrinogen binding), has no effect on platelet alpha granule release. The N-terminal 656 aa residue fragment (called F2) also binds platelets, causes dense granule secretion and allows platelet spreading. Acts in concert with Hsa to promote binding to human fibronectin (FN1) and vitronectin (VTN), and biofilm formation. F2 bind activated platelets more strongly than unactivated platelets. Binding to both FN1 and VTN is mediated at least in part by their glycosylation. This is Platelet adherence protein A from Streptococcus gordonii (strain Challis / ATCC 35105 / BCRC 15272 / CH1 / DL1 / V288).